A 310-amino-acid polypeptide reads, in one-letter code: MIIVTGGAGFIGSNIVKSLNDIGYRDILVVDNLKDGTKFVNLVDLDIADYVDKEDFVASIVAGDDLGDIEAVFHEGACSSTTEWDGKYMMDNNYQYSKDVLHYCLDRSIPFLYASSAATYGGRNDNFIEDRQYEQPLNVYGYSKFLFDQYVREILPEAESQICGFRYFNVYGPREGHKGSMASVAFHLNNQINQGENPKLFSGSENFKRDFIYVGDVAAVNLWFWQNGVSGIFNCGTGRAESFQAVADATLAFHNKGGVEYIEFPEKLKGRYQAYTQADLTNLRAAGYDKPFKTVAEGVAEYMTWLNRTV.

NADP(+)-binding positions include 10–11 (FI), 31–32 (DN), Lys-38, Lys-53, 75–79 (EGACS), and Asn-92. Catalysis depends on Tyr-140, which acts as the Proton acceptor. Lys-144 contributes to the NADP(+) binding site. Asn-169 lines the substrate pocket. Positions 170 and 178 each coordinate NADP(+). Lys-178 functions as the Proton acceptor in the catalytic mechanism. Substrate is bound by residues Ser-180, His-187, 201 to 204 (FSGS), Arg-209, and Tyr-272.

It belongs to the NAD(P)-dependent epimerase/dehydratase family. HldD subfamily. In terms of assembly, homopentamer. NADP(+) is required as a cofactor.

It catalyses the reaction ADP-D-glycero-beta-D-manno-heptose = ADP-L-glycero-beta-D-manno-heptose. Its pathway is nucleotide-sugar biosynthesis; ADP-L-glycero-beta-D-manno-heptose biosynthesis; ADP-L-glycero-beta-D-manno-heptose from D-glycero-beta-D-manno-heptose 7-phosphate: step 4/4. Catalyzes the interconversion between ADP-D-glycero-beta-D-manno-heptose and ADP-L-glycero-beta-D-manno-heptose via an epimerization at carbon 6 of the heptose. This Pectobacterium atrosepticum (strain SCRI 1043 / ATCC BAA-672) (Erwinia carotovora subsp. atroseptica) protein is ADP-L-glycero-D-manno-heptose-6-epimerase.